The chain runs to 339 residues: Undecaprenyl-phosphate 4-deoxy-4-formamido-L-arabinose transferase (339 aa).

Helical transmembrane passes span 235–255 (LSLV…FLLV) and 269–289 (LFVL…GMGL).

Belongs to the glycosyltransferase 2 family.

The protein resides in the cell inner membrane. The enzyme catalyses UDP-4-deoxy-4-formamido-beta-L-arabinose + di-trans,octa-cis-undecaprenyl phosphate = 4-deoxy-4-formamido-alpha-L-arabinopyranosyl di-trans,octa-cis-undecaprenyl phosphate + UDP. The protein operates within glycolipid biosynthesis; 4-amino-4-deoxy-alpha-L-arabinose undecaprenyl phosphate biosynthesis; 4-amino-4-deoxy-alpha-L-arabinose undecaprenyl phosphate from UDP-4-deoxy-4-formamido-beta-L-arabinose and undecaprenyl phosphate: step 1/2. It functions in the pathway bacterial outer membrane biogenesis; lipopolysaccharide biosynthesis. Catalyzes the transfer of 4-deoxy-4-formamido-L-arabinose from UDP to undecaprenyl phosphate. The modified arabinose is attached to lipid A and is required for resistance to polymyxin and cationic antimicrobial peptides. This Pseudomonas aeruginosa (strain UCBPP-PA14) protein is Undecaprenyl-phosphate 4-deoxy-4-formamido-L-arabinose transferase.